Consider the following 431-residue polypeptide: Enolase (431 aa).

Residue Gln-167 coordinates (2R)-2-phosphoglycerate. Residue Glu-209 is the Proton donor of the active site. Mg(2+) is bound by residues Asp-246, Glu-289, and Asp-316. Positions 341, 370, 371, and 392 each coordinate (2R)-2-phosphoglycerate. Lys-341 (proton acceptor) is an active-site residue.

This sequence belongs to the enolase family. Component of the RNA degradosome, a multiprotein complex involved in RNA processing and mRNA degradation. Mg(2+) serves as cofactor.

The protein localises to the cytoplasm. It localises to the secreted. Its subcellular location is the cell surface. It catalyses the reaction (2R)-2-phosphoglycerate = phosphoenolpyruvate + H2O. It functions in the pathway carbohydrate degradation; glycolysis; pyruvate from D-glyceraldehyde 3-phosphate: step 4/5. Functionally, catalyzes the reversible conversion of 2-phosphoglycerate (2-PG) into phosphoenolpyruvate (PEP). It is essential for the degradation of carbohydrates via glycolysis. In Shewanella pealeana (strain ATCC 700345 / ANG-SQ1), this protein is Enolase.